Reading from the N-terminus, the 119-residue chain is MARVKRGVQARRRHKKILTLAKGYYNARRKVFRVAKQAVIKAQQYAYIGRKQKKRNFRSLWITRINAAARINGLSYSRFMNGLLKAGITLDRKVLADIAVHDAAGFTALAEKAKGALAA.

Belongs to the bacterial ribosomal protein bL20 family.

Binds directly to 23S ribosomal RNA and is necessary for the in vitro assembly process of the 50S ribosomal subunit. It is not involved in the protein synthesizing functions of that subunit. This Xanthomonas oryzae pv. oryzae (strain PXO99A) protein is Large ribosomal subunit protein bL20.